The sequence spans 154 residues: uncharacterized protein (154 aa).

It localises to the mitochondrion. This is an uncharacterized protein from Vicia faba (Broad bean).